We begin with the raw amino-acid sequence, 617 residues long: Protein fem-1 homolog C (617 aa).

An N-acetylmethionine modification is found at Met1. 7 ANK repeats span residues Asp2–Val31, Asn40–Val70, Glu82–Asn111, Thr115–Val144, His148–Arg177, Lys181–Lys210, and Tyr213–Thr242. TPR repeat units lie at residues Ile245–Asp279 and Ser338–Asn371. ANK repeat units lie at residues Asn481–Val523 and Asp527–Ala556.

It belongs to the fem-1 family. As to quaternary structure, component of a Cul2-RING (CRL2) E3 ubiquitin-protein ligase complex, also named ECS (Elongin BC-CUL2/5-SOCS-box protein) complex, composed of CUL2, Elongin BC (ELOB and ELOC), RBX1 and substrate-specific adapter FEM1C. As to expression, widely expressed. Expressed at higher level in testis.

It functions in the pathway protein modification; protein ubiquitination. In terms of biological role, substrate-recognition component of a Cul2-RING (CRL2) E3 ubiquitin-protein ligase complex of the DesCEND (destruction via C-end degrons) pathway, which recognizes a C-degron located at the extreme C terminus of target proteins, leading to their ubiquitination and degradation. The C-degron recognized by the DesCEND pathway is usually a motif of less than ten residues and can be present in full-length proteins, truncated proteins or proteolytically cleaved forms. The CRL2(FEM1C) complex specifically recognizes proteins with an arginine at the C-terminus: recognizes and binds proteins ending with -Lys/Arg-Xaa-Arg and -Lys/Arg-Xaa-Xaa-Arg C-degrons, such as SIL1 or OR51B2, leading to their ubiquitination and degradation. The CRL2(FEM1C) complex mediates ubiquitination and degradation of truncated MSRB1/SEPX1 selenoproteins produced by failed UGA/Sec decoding. Promotes ubiquitination and degradation of SLBP. This is Protein fem-1 homolog C from Mus musculus (Mouse).